The sequence spans 175 residues: MEEDDHAGKHDALSALSQWLWSKPLGQHNADLDDDEEVTTGQEELFLPEEQVRARHLFSQKTISREVPAEQSRSGRVYQTARHSLMECSRPTMSIKSQWSFWSSSPKPLPKIPVPSLTSWTHTVNSTPFPQLSTSSGSQSPGKGRLQRLTSTERNGTTLPRTNSGSSTKAMVLHR.

Positions 30–47 (ADLDDDEEVTTGQEELFL) are homodimerization. The interval 50-156 (EQVRARHLFS…QRLTSTERNG (107 aa)) is RNA-binding. Residues Ser64 and Ser133 each carry the phosphoserine modification. Polar residues-rich tracts occupy residues 116–141 (SLTS…SQSP) and 148–169 (RLTS…SSTK). Residues 116-175 (SLTSWTHTVNSTPFPQLSTSSGSQSPGKGRLQRLTSTERNGTTLPRTNSGSSTKAMVLHR) are disordered.

This sequence belongs to the polerovirus movement protein family. In terms of assembly, homodimer. In terms of processing, phosphorylated.

The protein resides in the host cell junction. It localises to the host plasmodesma. Its subcellular location is the host Golgi apparatus. Functionally, together with movement protein P3a, facilitates long-distance movement of virions in host. Transports viral genome to neighboring plant cells directly through plasmosdesmata, without any budding. The movement protein allows efficient cell to cell propagation, by bypassing the host cell wall barrier. Binds ssRNA. The sequence is that of Movement protein from Turnip yellows virus (isolate FL-1) (TuYV).